A 262-amino-acid polypeptide reads, in one-letter code: Phosphatidylglycerol--prolipoprotein diacylglyceryl transferase (262 aa).

Transmembrane regions (helical) follow at residues 17 to 37 (FAIH…LLLG), 59 to 79 (LLFA…TLFY), 94 to 114 (IWEG…ALYW), and 121 to 141 (TTFF…LAFG). Residue arginine 142 coordinates a 1,2-diacyl-sn-glycero-3-phospho-(1'-sn-glycerol). 3 helical membrane passes run 176-196 (QIYQ…FYAG), 201-221 (VGQV…LAEY), and 231-251 (LLGL…FFGI).

This sequence belongs to the Lgt family.

It localises to the cell inner membrane. The catalysed reaction is L-cysteinyl-[prolipoprotein] + a 1,2-diacyl-sn-glycero-3-phospho-(1'-sn-glycerol) = an S-1,2-diacyl-sn-glyceryl-L-cysteinyl-[prolipoprotein] + sn-glycerol 1-phosphate + H(+). It participates in protein modification; lipoprotein biosynthesis (diacylglyceryl transfer). Its function is as follows. Catalyzes the transfer of the diacylglyceryl group from phosphatidylglycerol to the sulfhydryl group of the N-terminal cysteine of a prolipoprotein, the first step in the formation of mature lipoproteins. The sequence is that of Phosphatidylglycerol--prolipoprotein diacylglyceryl transferase from Polynucleobacter necessarius subsp. necessarius (strain STIR1).